The chain runs to 486 residues: Galactose-3-O-sulfotransferase 4 (486 aa).

Residues 1 to 18 (MGPLSPARTLRLWGPRSL) lie on the Cytoplasmic side of the membrane. A helical; Signal-anchor for type II membrane protein membrane pass occupies residues 19 to 39 (GVALGVFMTIGFALQLLGGPF). At 40 to 486 (QRRLPGLQLR…PLKTSRPLSP (447 aa)) the chain is on the lumenal side. N374 carries N-linked (GlcNAc...) asparagine glycosylation.

This sequence belongs to the galactose-3-O-sulfotransferase family. Mn(2+) is required as a cofactor. As to expression, expressed mainly in placenta, thymus, testis, ovary, spinal cord, trachea and adrenal gland and at low levels in brain, lung, spleen, prostate, small intestine, colon, stomach thyroid and lymph node.

The protein resides in the golgi apparatus. It localises to the golgi stack membrane. The protein operates within protein modification; carbohydrate sulfation. Catalyzes the transfer of sulfate to beta-1,3-linked galactose residues in O-linked glycoproteins. Good substrates include asialofetuin, Gal-beta-1,3-GalNAc and Gal-beta-1,3 (GlcNAc-beta-1,6)GalNAc. The protein is Galactose-3-O-sulfotransferase 4 (GAL3ST4) of Homo sapiens (Human).